The sequence spans 138 residues: Ribosomal RNA large subunit methyltransferase H (138 aa).

S-adenosyl-L-methionine contacts are provided by residues G86 and 105–110 (LSPLTF).

This sequence belongs to the RNA methyltransferase RlmH family. In terms of assembly, homodimer.

The protein resides in the cytoplasm. The enzyme catalyses pseudouridine(1915) in 23S rRNA + S-adenosyl-L-methionine = N(3)-methylpseudouridine(1915) in 23S rRNA + S-adenosyl-L-homocysteine + H(+). Specifically methylates the pseudouridine at position 1915 (m3Psi1915) in 23S rRNA. The polypeptide is Ribosomal RNA large subunit methyltransferase H (Prochlorococcus marinus (strain MIT 9215)).